We begin with the raw amino-acid sequence, 244 residues long: Serine-rich single-pass membrane protein 1 (244 aa).

Residues 35–55 (CGTIGSFLLWYFVIVFVLMFF) form a helical membrane-spanning segment. Disordered regions lie at residues 65 to 114 (DKKD…PVTN), 126 to 191 (QRRA…LGSY), and 210 to 244 (LAHH…FSKF). Basic and acidic residues predominate over residues 80–94 (ASKETSCKRQSKDSA). Composition is skewed to polar residues over residues 96 to 114 (DPSQ…PVTN) and 132 to 142 (QSQFNEVNQNQ). Positions 161-176 (SWKESESEHHPSPDSI) are enriched in basic and acidic residues.

Its subcellular location is the membrane. The sequence is that of Serine-rich single-pass membrane protein 1 (SSMEM1) from Homo sapiens (Human).